We begin with the raw amino-acid sequence, 265 residues long: Protein Exd1 homolog (265 aa).

Residues 32-82 (EKQLDRIVLIYQVDTTYHSALKDIKDQKIISLLVEPSFYGRHHPTSILVVA) enclose the 3'-5' exonuclease domain.

Belongs to the EXD1 family. In terms of assembly, homodimer.

In terms of biological role, RNA-binding protein. Inactive exonuclease. The polypeptide is Protein Exd1 homolog (Drosophila melanogaster (Fruit fly)).